The following is a 162-amino-acid chain: Caveolin-2 (162 aa).

The Cytoplasmic segment spans residues 1–86 (MGLETEKADV…FEVSKYVIYK (86 aa)). Residue Tyr19 is modified to Phosphotyrosine; by SRC. Phosphoserine occurs at positions 20, 23, and 36. The helical intramembrane region spans 87-107 (FLTLLLAMPMAFAAGVLFATL). Residues 108–162 (SCLHIWIIMPFVKTCLMVLPSVQTIWKSVTDAVIAPLCSSVGRSFSSVSLQVSHD) are Cytoplasmic-facing.

Belongs to the caveolin family. As to quaternary structure, monomer or homodimer. Interacts with CAV1; the interaction forms a stable heterooligomeric complex that is required for targeting to lipid rafts and for caveolae formation. Tyrosine phosphorylated forms do not form heterooligomers with the Tyr-19-phosphorylated form existing as a monomer or dimer. Interacts (tyrosine phosphorylated form) with the SH2 domain-containing proteins, RASA1, NCK1 and SRC. Interacts (tyrosine phosphorylated form) with INSR. Interacts (Tyr-19 phosphorylated form) with MAPK1 (phosphorylated form); the interaction, promoted by insulin, leads to nuclear location and MAPK1 activation. Interacts with STAT3; the interaction is increased on insulin-induced tyrosine phosphorylation leading to STAT activation. Phosphorylated on serine and tyrosine residues. CAV1 promotes phosphorylation on Ser-23 which then targets the complex to the plasma membrane, lipid rafts and caveolae. Phosphorylation on Ser-36 appears to modulate mitosis in endothelial cells. Phosphorylation on Tyr-19 is required for insulin-induced phosphorylation of MAPK1 and DNA binding of STAT3. Tyrosine phosphorylation is induced by both EGF and insulin.

The protein localises to the nucleus. The protein resides in the cytoplasm. It is found in the golgi apparatus membrane. Its subcellular location is the cell membrane. It localises to the membrane. The protein localises to the caveola. Functionally, may act as a scaffolding protein within caveolar membranes. Interacts directly with G-protein alpha subunits and can functionally regulate their activity. Acts as an accessory protein in conjunction with CAV1 in targeting to lipid rafts and driving caveolae formation. The Ser-36 phosphorylated form has a role in modulating mitosis in endothelial cells. Positive regulator of cellular mitogenesis of the MAPK signaling pathway. Required for the insulin-stimulated nuclear translocation and activation of MAPK1 and STAT3, and the subsequent regulation of cell cycle progression. This chain is Caveolin-2 (CAV2), found in Canis lupus familiaris (Dog).